The chain runs to 376 residues: MASYPCHQHASAFDQAARSRGHSNRRTALRPRRQQEATEVRLEQKMPTLLRVYIDGPHGMGKTTTTQLLVALGSRDDIVYVPEPMTYWQVLGASETIANIYTTQHRLDQGEISAGDAAVVMTSAQITMGMPYAVTDAVLAPHIGGEAGSSHAPPPALTLIFDRHPIAALLCYPAARYLMGSMTPQAVLAFVALIPPTLPGTNIVLGALPEDRHIDRLAKRQRPGERLDLAMLAAIRRVYGLLANTVRYLQGGGSWREDWGQLSGTAVPPQGAEPQSNAGPRPHIGDTLFTLFRAPELLAPNGDLYNVFAWALDVLAKRLRPMHVFILDYDQSPAGCRDALLQLTSGMVQTHVTTPGSIPTICDLARMFAREMGEAN.

Residues 1–39 (MASYPCHQHASAFDQAARSRGHSNRRTALRPRRQQEATE) form a disordered region. Residues 19–32 (SRGHSNRRTALRPR) are compositionally biased toward basic residues. 56–63 (GPHGMGKT) contributes to the ATP binding site. E83 functions as the Proton acceptor in the catalytic mechanism. Residues Y101 and Q125 each contribute to the substrate site. R216 is a binding site for ATP. R222 is a substrate binding site. Residues 260 to 280 (GQLSGTAVPPQGAEPQSNAGP) are disordered.

The protein belongs to the herpesviridae thymidine kinase family. As to quaternary structure, homodimer.

It carries out the reaction thymidine + ATP = dTMP + ADP + H(+). Catalyzes the transfer of the gamma-phospho group of ATP to thymidine to generate dTMP in the salvage pathway of pyrimidine synthesis. The dTMP serves as a substrate for DNA polymerase during viral DNA replication. Allows the virus to be reactivated and to grow in non-proliferative cells lacking a high concentration of phosphorylated nucleic acid precursors. The sequence is that of Thymidine kinase from Human herpesvirus 1 (strain KOS) (HHV-1).